The chain runs to 395 residues: Aurora kinase A (395 aa).

The disordered stretch occupies residues 1–114 (MDRCKENCVS…QASLQKTEDT (114 aa)). Polar residues-rich tracts occupy residues 29-60 (QIPS…SQAQ) and 84-99 (RLNN…ASGN). A phosphoserine mark is found at serine 40 and serine 50. Basic and acidic residues predominate over residues 100 to 114 (DSEKEQASLQKTEDT). A Protein kinase domain is found at 124-374 (FDIGRPLGKG…LAEVLEHPWI (251 aa)). ATP contacts are provided by residues lysine 134, lysine 153, and 201–204 (LEYA). Aspartate 247 (proton acceptor) is an active-site residue. Lysine 249 is covalently cross-linked (Glycyl lysine isopeptide (Lys-Gly) (interchain with G-Cter in SUMO2)). Residues 251–252 (EN) and aspartate 265 each bind ATP. Positions 271 to 284 (HAPSSRRTTMCGTL) are activation segment. Phosphothreonine is present on residues threonine 278 and threonine 279. Phosphoserine; by PKA and PAK is present on serine 333. A compositionally biased stretch (polar residues) spans 376-385 (ANSSKPPTGH). The interval 376–395 (ANSSKPPTGHTSKEPTSKSS) is disordered. The segment covering 386–395 (TSKEPTSKSS) has biased composition (basic and acidic residues).

It belongs to the protein kinase superfamily. Ser/Thr protein kinase family. Aurora subfamily. Part of a complex composed of NEDD9, AURKA and CTTN; within the complex NEDD9 acts as a scaffold protein and is required for complex formation. Identified in a complex with AUNIP and NIN. Interacts with CPEB1, JTB, TACC1, TPX2, PPP2CA, as well as with the protein phosphatase type 1 (PP1) isoforms PPP1CA, PPP1CB and PPP1CC. Also interacts with its substrates ARHGEF2, BORA, KIF2A, PARD3, and p53/TP53. Interaction with BORA promotes phosphorylation of PLK1. Interacts with GADD45A, competing with its oligomerization. Interacts with FBXL7 and CIMAP3. Interacts (via C-terminus) with AUNIP (via C-terminus). Interacts with SIRT2. Interacts with FRY; this interaction facilitates AURKA-mediated PLK1 phosphorylation. Interacts with MYCN; interaction is phospho-independent and triggers AURKA activation; AURKA competes with FBXW7 for binding to unphosphorylated MYCN but not for binding to phosphorylated MYCN. Interacts with HNRNPU. Interacts with AAAS. Interacts with KLHL18 and CUL3. Interacts with FOXP1. Interacts with HDAC6; AURKA-mediated phosphorylation of HDAC6 promotes deacetylation of alpha-tubulin. Activated by phosphorylation at Thr-279; this brings about a change in the conformation of the activation segment. Phosphorylation at Thr-279 varies during the cell cycle and is highest during M phase. Autophosphorylated at Thr-279 upon TPX2 binding. Thr-279 can be phosphorylated by several kinases, including PAK and PKA. Protein phosphatase type 1 (PP1) binds AURKA and inhibits its activity by dephosphorylating Thr-279 during mitosis. Phosphorylation at Ser-333 decreases the kinase activity. PPP2CA controls degradation by dephosphorylating Ser-52 at the end of mitosis. In terms of processing, ubiquitinated by the anaphase-promoting complex (APC), leading to its degradation by the proteasome. Ubiquitinated by CHFR, leading to its degradation by the proteasome. Ubiquitinated by the E3 ubiquitin-protein ligase complex SCF(FBXL7) during mitosis, leading to its degradation by the proteasome. As to expression, detected in embryonic neurons in dorsal root ganglia and brain cortex (at protein level). Highly expressed in testis, in about one third of the seminiferous tubules. Expression is restricted to specific spermatocytes nearing completion of prophase, with levels falling off on transition to elongated spermatids. Highly expressed in the ovary, expression in the oocyte starts around the transition to large growing follicle. Abundant expression is seen in the proliferating granulosa and thecal cells of the growing follicle, and in the young corpus luteum. Very weakly expressed in spleen and intestine.

Its subcellular location is the cytoplasm. The protein localises to the cytoskeleton. The protein resides in the microtubule organizing center. It localises to the centrosome. It is found in the spindle pole. Its subcellular location is the centriole. The protein localises to the cell projection. The protein resides in the neuron projection. It localises to the cilium. It is found in the cilium basal body. Its subcellular location is the basolateral cell membrane. It carries out the reaction L-seryl-[protein] + ATP = O-phospho-L-seryl-[protein] + ADP + H(+). It catalyses the reaction L-threonyl-[protein] + ATP = O-phospho-L-threonyl-[protein] + ADP + H(+). Activation of CDK1, appears to be an upstream event of AURKA activation. Phosphatase inhibitor-2 (PPP1R2) and TPX2 act also as activators. Inactivated by the G2 checkpoint. Inhibited by GADD45A and p53/TP53, and through dephosphorylation by protein phosphatase type 1 (PP1). MLN8054 is also a potent and selective inhibitor. Activated during the early phase of cilia disassembly in the presence of CIMAP3. Inhibited by the small molecule inhibitor VX-680. Its function is as follows. Mitotic serine/threonine kinase that contributes to the regulation of cell cycle progression. Associates with the centrosome and the spindle microtubules during mitosis and plays a critical role in various mitotic events including the establishment of mitotic spindle, centrosome duplication, centrosome separation as well as maturation, chromosomal alignment, spindle assembly checkpoint, and cytokinesis. Required for normal spindle positioning during mitosis and for the localization of NUMA1 and DCTN1 to the cell cortex during metaphase. Required for initial activation of CDK1 at centrosomes. Phosphorylates numerous target proteins, including ARHGEF2, BORA, BRCA1, CDC25B, DLGP5, HDAC6, KIF2A, LATS2, NDEL1, PARD3, PPP1R2, PLK1, RASSF1, TACC3, p53/TP53 and TPX2. Phosphorylates MCRS1 which is required for MCRS1-mediated kinetochore fiber assembly and mitotic progression. Regulates KIF2A tubulin depolymerase activity. Required for normal axon formation. Plays a role in microtubule remodeling during neurite extension. Important for microtubule formation and/or stabilization. Also acts as a key regulatory component of the p53/TP53 pathway, and particularly the checkpoint-response pathways critical for oncogenic transformation of cells, by phosphorylating and destabilizing p53/TP53. Phosphorylates its own inhibitors, the protein phosphatase type 1 (PP1) isoforms, to inhibit their activity. Inhibits cilia outgrowth. Required for cilia disassembly via phosphorylation of HDAC6 and subsequent deacetylation of alpha-tubulin. Regulates protein levels of the anti-apoptosis protein BIRC5 by suppressing the expression of the SCF(FBXL7) E3 ubiquitin-protein ligase substrate adapter FBXL7 through the phosphorylation of the transcription factor FOXP1. The sequence is that of Aurora kinase A (Aurka) from Mus musculus (Mouse).